We begin with the raw amino-acid sequence, 338 residues long: MIREAIARVSSGTDLTPAEAGGVMAEIMHGAATPAQIGGFLTALRMKGETVAEIAAFARAMRAAAVPVALPAPGARVDTCGTGGDGAGTFNISTAAAFVAAGAGVPVVKHGNRGVSSRCGSADVLEALGVSVAIPPDRVGEVLAAAGIAFLFAPAYHPAMQYARIARQEIGIRTVFNLLGPLTNPAGAGAHLLGVYDPCLTLPVARVLGDLGAERAMVVHGAGLDEIATAGPTTVAELRGGEVTTYTLDCTEFGVPRSSVAALRGGGPEENAATLLAVLAGEEGPARDIVLLNAGAAIYLGGKADGIAGGIAHAEASLDSGAALDRLRRLVEATGGAA.

Residues Gly-81, 84-85 (GD), Thr-89, 91-94 (NIST), 109-117 (KHGNRGVSS), and Ser-121 contribute to the 5-phospho-alpha-D-ribose 1-diphosphate site. Residue Gly-81 coordinates anthranilate. Ser-93 serves as a coordination point for Mg(2+). Asn-112 serves as a coordination point for anthranilate. Arg-167 contacts anthranilate. Residues Asp-225 and Glu-226 each contribute to the Mg(2+) site.

Belongs to the anthranilate phosphoribosyltransferase family. Homodimer. It depends on Mg(2+) as a cofactor.

It carries out the reaction N-(5-phospho-beta-D-ribosyl)anthranilate + diphosphate = 5-phospho-alpha-D-ribose 1-diphosphate + anthranilate. It functions in the pathway amino-acid biosynthesis; L-tryptophan biosynthesis; L-tryptophan from chorismate: step 2/5. Catalyzes the transfer of the phosphoribosyl group of 5-phosphorylribose-1-pyrophosphate (PRPP) to anthranilate to yield N-(5'-phosphoribosyl)-anthranilate (PRA). The chain is Anthranilate phosphoribosyltransferase from Methanoculleus marisnigri (strain ATCC 35101 / DSM 1498 / JR1).